The sequence spans 809 residues: Pentatricopeptide repeat-containing protein At1g11290, chloroplastic (809 aa).

The transit peptide at 1–46 (MSSQLVQFSTVPQIPNPPSRHRHFLSERNYIPANVYEHPAALLLER) directs the protein to the chloroplast. PPR repeat units lie at residues 68-98 (EHFF…IDSK), 99-133 (LNVL…DVEP), 134-168 (VVYN…GFSL), 169-199 (DLFA…MPER), 200-234 (DLVS…NLKP), 235-269 (SFIT…GFDS), 270-300 (LVNI…MLER), 301-335 (NVVS…GVKP), 336-370 (TDVS…GLDR), 371-401 (NVSV…LQSR), 402-436 (TLVS…TVKP), 437-471 (DTFT…CLDK), 472-502 (NVFV…MSER), 503-537 (HVTT…TIKP), 538-568 (NGVT…MKEN), and 574-604 (SMDH…MPVK). Residues 609–684 (VYGAMLGACQ…TPGCSMVEIK (76 aa)) form a type E motif region. A type E(+) motif region spans residues 685-715 (NEVHSFFSGSTAHPDSKKIYAFLEKLICHIK). The segment at 716-809 (EAGYVPDTNL…NGACSCGDYW (94 aa)) is type DYW motif.

Belongs to the PPR family. PCMP-H subfamily.

The protein localises to the plastid. It localises to the chloroplast. Its function is as follows. Involved in multiple sites RNA editing events in chloroplasts. Involved in the editing of the site 7 of ndhB (ndhB-7) and site 5 of ndhD (ndhD-5) transcripts, which are two plastid-encoded subunits of the chloroplast NAD(P)H dehydrogenase (NDH) complex. Involved in the editing of the site 3 of rpoB (rpoB-3) transcript. Required for the activity of the NDH complex of the photosynthetic electron transport chain. Possesses low endoribonuclease activity in vitro. The protein is Pentatricopeptide repeat-containing protein At1g11290, chloroplastic (PCMP-H40) of Arabidopsis thaliana (Mouse-ear cress).